Reading from the N-terminus, the 138-residue chain is Acidic phospholipase A2 6 (138 aa).

Residues 1–16 (MRTLWIMAVLLVGVEG) form the signal peptide. Disulfide bonds link C42–C131, C44–C60, C59–C111, C65–C138, C66–C104, C73–C97, and C91–C102. Ca(2+)-binding residues include Y43, G45, and G47. H63 is a catalytic residue. D64 provides a ligand contact to Ca(2+). The active site involves D105.

It belongs to the phospholipase A2 family. Group II subfamily. D49 sub-subfamily. Homodimer. It depends on Ca(2+) as a cofactor. In terms of tissue distribution, expressed by the venom gland.

The protein resides in the secreted. It catalyses the reaction a 1,2-diacyl-sn-glycero-3-phosphocholine + H2O = a 1-acyl-sn-glycero-3-phosphocholine + a fatty acid + H(+). Functionally, snake venom phospholipase A2 (PLA2) that has high lipolytic activity. PLA2 catalyzes the calcium-dependent hydrolysis of the 2-acyl groups in 3-sn-phosphoglycerides. The chain is Acidic phospholipase A2 6 from Craspedocephalus gramineus (Bamboo pit viper).